Here is a 100-residue protein sequence, read N- to C-terminus: Integration host factor subunit alpha (100 aa).

Belongs to the bacterial histone-like protein family. Heterodimer of an alpha and a beta chain.

Functionally, this protein is one of the two subunits of integration host factor, a specific DNA-binding protein that functions in genetic recombination as well as in transcriptional and translational control. This Zymomonas mobilis subsp. mobilis (strain ATCC 31821 / ZM4 / CP4) protein is Integration host factor subunit alpha (ihfA).